The primary structure comprises 52 residues: U-scutigerotoxin(01)-Tl1a (52 aa).

Residues 1–25 (MLAKAMSLLMMFLLVLVIGSVMVSA) form the signal peptide.

It belongs to the scutigerotoxin-01 family. In terms of processing, contains 1 disulfide bond. In terms of tissue distribution, expressed by the venom gland.

It localises to the secreted. The sequence is that of U-scutigerotoxin(01)-Tl1a from Thereuopoda longicornis (Long-legged centipede).